Consider the following 247-residue polypeptide: Retbindin (247 aa).

The signal sequence occupies residues 1 to 31; it reads MAHEGHSQHSGLVWALRPILAWIFLVACGWS. 4 disulfides stabilise this stretch: Cys-99/Cys-169, Cys-106/Cys-146, Cys-139/Cys-183, and Cys-152/Cys-165.

It belongs to the folate receptor family. Not N-glycosylated. As to expression, expressed in the peripheral retina where it localizes to the inter-photoreceptor matrix (at protein level). May be produced by rod photoreceptors (at protein level).

It is found in the secreted. Its subcellular location is the extracellular space. The protein resides in the extracellular matrix. The protein localises to the interphotoreceptor matrix. It localises to the cell membrane. Riboflavin-binding protein which might have a role in retinal flavin transport. This chain is Retbindin (Rtbdn), found in Mus musculus (Mouse).